The chain runs to 181 residues: Inner membrane-spanning protein YciB (181 aa).

The next 5 membrane-spanning stretches (helical) occupy residues 10–30, 50–70, 72–92, 118–138, and 148–168; these read LVIFFAVYKFFDIYIASGALI, MHLITFAMVTVFGTLTLVFHD, AFIKWKVTIIYALFALALGIS, ITWYWVIFFATCGLVNIYVAF, and FKVFGLTALTLVNTVITVFYL.

This sequence belongs to the YciB family.

Its subcellular location is the cell inner membrane. Functionally, plays a role in cell envelope biogenesis, maintenance of cell envelope integrity and membrane homeostasis. The polypeptide is Inner membrane-spanning protein YciB (Shewanella putrefaciens (strain CN-32 / ATCC BAA-453)).